The chain runs to 386 residues: Succinate--CoA ligase [ADP-forming] subunit beta (386 aa).

In terms of domain architecture, ATP-grasp spans 9–244; that stretch reads KEILRKYGVP…HDEEDPLETR (236 aa). ATP contacts are provided by residues lysine 46, 53–55, glutamate 99, cysteine 102, and glutamate 107; that span reads GRG. Mg(2+) contacts are provided by asparagine 199 and aspartate 213. Substrate contacts are provided by residues asparagine 264 and 321–323; that span reads GIM.

Belongs to the succinate/malate CoA ligase beta subunit family. As to quaternary structure, heterotetramer of two alpha and two beta subunits. It depends on Mg(2+) as a cofactor.

It carries out the reaction succinate + ATP + CoA = succinyl-CoA + ADP + phosphate. It catalyses the reaction GTP + succinate + CoA = succinyl-CoA + GDP + phosphate. It functions in the pathway carbohydrate metabolism; tricarboxylic acid cycle; succinate from succinyl-CoA (ligase route): step 1/1. Its function is as follows. Succinyl-CoA synthetase functions in the citric acid cycle (TCA), coupling the hydrolysis of succinyl-CoA to the synthesis of either ATP or GTP and thus represents the only step of substrate-level phosphorylation in the TCA. The beta subunit provides nucleotide specificity of the enzyme and binds the substrate succinate, while the binding sites for coenzyme A and phosphate are found in the alpha subunit. The protein is Succinate--CoA ligase [ADP-forming] subunit beta of Rickettsia felis (strain ATCC VR-1525 / URRWXCal2) (Rickettsia azadi).